We begin with the raw amino-acid sequence, 203 residues long: Small ribosomal subunit protein uS7A (203 aa).

It belongs to the universal ribosomal protein uS7 family. In terms of assembly, component of the small ribosomal subunit (SSU). Mature yeast ribosomes consist of a small (40S) and a large (60S) subunit. The 40S small subunit contains 1 molecule of ribosomal RNA (18S rRNA) and at least 33 different proteins. The large 60S subunit contains 3 rRNA molecules (25S, 5.8S and 5S rRNA) and at least 46 different proteins.

The protein resides in the cytoplasm. It is found in the nucleus. Its subcellular location is the nucleolus. Functionally, component of the ribosome, a large ribonucleoprotein complex responsible for the synthesis of proteins in the cell. The small ribosomal subunit (SSU) binds messenger RNAs (mRNAs) and translates the encoded message by selecting cognate aminoacyl-transfer RNA (tRNA) molecules. The large subunit (LSU) contains the ribosomal catalytic site termed the peptidyl transferase center (PTC), which catalyzes the formation of peptide bonds, thereby polymerizing the amino acids delivered by tRNAs into a polypeptide chain. The nascent polypeptides leave the ribosome through a tunnel in the LSU and interact with protein factors that function in enzymatic processing, targeting, and the membrane insertion of nascent chains at the exit of the ribosomal tunnel. In Schizosaccharomyces pombe (strain 972 / ATCC 24843) (Fission yeast), this protein is Small ribosomal subunit protein uS7A (rps5).